We begin with the raw amino-acid sequence, 538 residues long: Cytochrome P450 monooxygenase astC (538 aa).

A helical membrane pass occupies residues 18-38 (ALMLPALVGCALLIYRAFFAI). Position 481 (C481) interacts with heme.

It belongs to the cytochrome P450 family. It depends on heme as a cofactor.

It localises to the membrane. The protein operates within secondary metabolite biosynthesis; terpenoid biosynthesis. Cytochrome P450 monooxygenase; part of the gene cluster that mediates the biosynthesis of the sesquiterpenoid aspterric acid (AA), an inhibitor of dihydroxy-acid dehydratase (DHAD) effective as an herbicide. AstC catalyzes the third and last step within the pathway and converts the alpha-epoxy carboxylate intermediate produced by the cytochrome P450 monooxygenase astC from (-)daucane into the tricyclic aspterric acid. This is Cytochrome P450 monooxygenase astC from Aspergillus terreus (strain NIH 2624 / FGSC A1156).